Reading from the N-terminus, the 144-residue chain is L-fucose mutarotase (144 aa).

The Proton donor role is filled by His22. Substrate-binding positions include Asp30, Arg109, and 131–133 (YGN).

It belongs to the RbsD / FucU family. FucU mutarotase subfamily. As to quaternary structure, homodecamer.

The protein localises to the cytoplasm. It catalyses the reaction alpha-L-fucose = beta-L-fucose. It participates in carbohydrate metabolism; L-fucose metabolism. In terms of biological role, involved in the anomeric conversion of L-fucose. In Actinobacillus pleuropneumoniae serotype 5b (strain L20), this protein is L-fucose mutarotase.